A 130-amino-acid polypeptide reads, in one-letter code: MSMQDPIADMLTRIRNGQSANKVAVTMPSSKLKLAIANVLKEEGYIEEFKIEGDTKPELELTLKYFQGKAVVESIQRVSRPGLRIYKRKDELPKVMAGLGIAVVSTSKGVMTDRAARQAGLGGEIICYVA.

The protein belongs to the universal ribosomal protein uS8 family. In terms of assembly, part of the 30S ribosomal subunit. Contacts proteins S5 and S12.

Functionally, one of the primary rRNA binding proteins, it binds directly to 16S rRNA central domain where it helps coordinate assembly of the platform of the 30S subunit. The sequence is that of Small ribosomal subunit protein uS8 from Erwinia tasmaniensis (strain DSM 17950 / CFBP 7177 / CIP 109463 / NCPPB 4357 / Et1/99).